A 385-amino-acid chain; its full sequence is Multidrug resistance protein MdtE (385 aa).

An N-terminal signal peptide occupies residues 1–20; the sequence is MNRRRKLLIPLLFCGAMLTA. Cys21 carries N-palmitoyl cysteine lipidation. Cys21 carries S-diacylglycerol cysteine lipidation.

It belongs to the membrane fusion protein (MFP) (TC 8.A.1) family. Homotrimer. Part of the tripartite efflux system MdtEF-TolC, which is composed of an inner membrane transporter, MdtF, a membrane fusion protein, MdtE, and an outer membrane component, TolC. The complex forms a large protein conduit and can translocate molecules across both the inner and outer membranes.

It is found in the cell inner membrane. Its function is as follows. Part of the tripartite efflux system MdtEF-TolC, which confers resistance to various compounds. This Escherichia coli O6:H1 (strain CFT073 / ATCC 700928 / UPEC) protein is Multidrug resistance protein MdtE (mdtE).